The following is a 351-amino-acid chain: Muscleblind-like protein 2a (351 aa).

4 C3H1-type zinc fingers span residues 13–41, 47–73, 177–205, and 213–239; these read WLTLEVCRQFQRGTCSRSDEECKFAHPPK, NGRVIACFDSLKGRCTRENCKYLHPPA, TDKLEVCREFQRGNCARGETDCRFAHPSD, and DNTVTVCMDYIKSRCSREKCKYFHPPA.

Belongs to the muscleblind family. Expressed in fast and slow myotomal muscle, heart, liver, skin, brain and testis.

The protein localises to the nucleus. Its subcellular location is the cytoplasm. In terms of biological role, involved in pre-mRNA alternative splicing regulation. RNA-binding protein that binds to 5'ACACCC-3' core sequence. This chain is Muscleblind-like protein 2a (mbnl2a), found in Takifugu rubripes (Japanese pufferfish).